Here is a 487-residue protein sequence, read N- to C-terminus: N-succinylglutamate 5-semialdehyde dehydrogenase (487 aa).

Glycine 221–glycine 226 lines the NAD(+) pocket. Catalysis depends on residues glutamate 244 and cysteine 278.

This sequence belongs to the aldehyde dehydrogenase family. AstD subfamily.

The enzyme catalyses N-succinyl-L-glutamate 5-semialdehyde + NAD(+) + H2O = N-succinyl-L-glutamate + NADH + 2 H(+). Its pathway is amino-acid degradation; L-arginine degradation via AST pathway; L-glutamate and succinate from L-arginine: step 4/5. Catalyzes the NAD-dependent reduction of succinylglutamate semialdehyde into succinylglutamate. This Burkholderia vietnamiensis (strain G4 / LMG 22486) (Burkholderia cepacia (strain R1808)) protein is N-succinylglutamate 5-semialdehyde dehydrogenase.